The primary structure comprises 515 residues: MFKFNKAAQQQRIDNRNSAVTGHDPFVRPPVPEKKVRNIMKKLHKANGLKRSNSAIEFDVSALTAANRRQIYSSNRSASSEQDNSDLSEHSEKSPLVSARLDNLARLFFSKSMPAETGSRDTIDSVLTTRPNIKYQYSALDSGNGIVERSPRERAQREKALNATQEWIQGANGRYEVIAHLDEIGSRHGKNWFLVTDASVRTDRLQTLLPLPPDCVAFEDLPPNECAREILMELLGSLHHPYIYPVLDLGFLRNSSYNYACLVTPFNSRGSLKDLIYKAQWNEPWARKYTRKPNGLPVSQVQRLGRQILEALLFLKERGFPLHGHLHSGNVILQNGAARLSGLENGLLGLSSRINAVMWSRSVTEIENVDIVCFGHLLYEMCTGQELTTPKPSMRVLEMELQHYPQIGQTRKQILEILGLIFEPPSGVCPSVEDLVLCDLFRSIDLRELRGPCFSTIKPSLSRSTLNLLQAVKKRQCASLGHSLSEANSPCTPPSTPHDRRTGVLPAPYEVFRMY.

The disordered stretch occupies residues 1 to 31; the sequence is MFKFNKAAQQQRIDNRNSAVTGHDPFVRPPV. Residues 7 to 20 show a composition bias toward polar residues; that stretch reads AAQQQRIDNRNSAV. Serine 54 and serine 79 each carry phosphoserine. A compositionally biased stretch (polar residues) spans 73–82; sequence SSNRSASSEQ. The tract at residues 73 to 94 is disordered; it reads SSNRSASSEQDNSDLSEHSEKS. The interaction with Slo stretch occupies residues 191-203; that stretch reads NWFLVTDASVRTD. Residues 483–503 form a disordered region; sequence SLSEANSPCTPPSTPHDRRTG.

As to quaternary structure, interacts specifically with Slo; which activates Slo activity. Interacts with 14-3-3-zeta when phosphorylated. Forms a heterotetrameric complex containing phosphorylated Slob, Slo and 14-3-3-zeta, which represses Slo activity due to the indirect interaction between Slo and 14-3-3-zeta. In terms of processing, phosphorylated. Phosphorylation of Ser-54 and Ser-79 is required for the interaction with 14-3-3-zeta but not with that of Slo. As to expression, expressed in head. In larval brain, it is expressed in the mushroom body. Also expressed in larval muscles.

The protein resides in the cytoplasm. Functionally, regulator of calcium-activated channel Slo. Increases or decreases the voltage sensitivity of Slo, depending on the absence or presence of 14-3-3-zeta in the complex, respectively. The chain is Slowpoke-binding protein (Slob) from Drosophila melanogaster (Fruit fly).